The following is a 320-amino-acid chain: Lipoyl synthase (320 aa).

A disordered region spans residues 9-31 (ANDARPRHPEKAHRPDQPIQRKP). Over residues 12–31 (ARPRHPEKAHRPDQPIQRKP) the composition is skewed to basic and acidic residues. [4Fe-4S] cluster contacts are provided by cysteine 60, cysteine 65, cysteine 71, cysteine 86, cysteine 90, cysteine 93, and serine 299. Positions 72 to 288 (WEKKHATFMI…ETTAYAKGFL (217 aa)) constitute a Radical SAM core domain.

The protein belongs to the radical SAM superfamily. Lipoyl synthase family. It depends on [4Fe-4S] cluster as a cofactor.

It is found in the cytoplasm. The catalysed reaction is [[Fe-S] cluster scaffold protein carrying a second [4Fe-4S](2+) cluster] + N(6)-octanoyl-L-lysyl-[protein] + 2 oxidized [2Fe-2S]-[ferredoxin] + 2 S-adenosyl-L-methionine + 4 H(+) = [[Fe-S] cluster scaffold protein] + N(6)-[(R)-dihydrolipoyl]-L-lysyl-[protein] + 4 Fe(3+) + 2 hydrogen sulfide + 2 5'-deoxyadenosine + 2 L-methionine + 2 reduced [2Fe-2S]-[ferredoxin]. It participates in protein modification; protein lipoylation via endogenous pathway; protein N(6)-(lipoyl)lysine from octanoyl-[acyl-carrier-protein]: step 2/2. Functionally, catalyzes the radical-mediated insertion of two sulfur atoms into the C-6 and C-8 positions of the octanoyl moiety bound to the lipoyl domains of lipoate-dependent enzymes, thereby converting the octanoylated domains into lipoylated derivatives. This is Lipoyl synthase from Methylobacterium nodulans (strain LMG 21967 / CNCM I-2342 / ORS 2060).